The sequence spans 305 residues: Epoxyqueuosine reductase (305 aa).

Asp128 (proton donor) is an active-site residue. The 4Fe-4S ferredoxin-type domain maps to 170–202 (LSLTSDTPHAKYCGTCRKCLDICPTKAIVHPFV). [4Fe-4S] cluster contacts are provided by Cys182, Cys185, Cys188, Cys192, Cys208, Cys236, Cys239, and Cys243.

This sequence belongs to the QueG family. As to quaternary structure, monomer. The cofactor is cob(II)alamin. It depends on [4Fe-4S] cluster as a cofactor.

It localises to the cytoplasm. The enzyme catalyses epoxyqueuosine(34) in tRNA + AH2 = queuosine(34) in tRNA + A + H2O. The protein operates within tRNA modification; tRNA-queuosine biosynthesis. In terms of biological role, catalyzes the conversion of epoxyqueuosine (oQ) to queuosine (Q), which is a hypermodified base found in the wobble positions of tRNA(Asp), tRNA(Asn), tRNA(His) and tRNA(Tyr). The chain is Epoxyqueuosine reductase from Atelocyanobacterium thalassa (isolate ALOHA).